The following is an 87-amino-acid chain: Mitochondrial import inner membrane translocase subunit TIM9 (87 aa).

An N-acetylmethionine modification is found at Met-1. The Twin CX3C motif motif lies at 35–59 (CFTDCVNDFTTSKLTNKEQTCIMKC). Disulfide bonds link Cys-35–Cys-59 and Cys-39–Cys-55.

The protein belongs to the small Tim family. As to quaternary structure, heterohexamer; composed of 3 copies of TIM9 and 3 copies of TIM10, named soluble 70 kDa complex. Associates with the TIM12 component of the TIM22 complex, whose core is composed of TIM18, TIM22 and TIM54. Interacts with the transmembrane regions of multi-pass transmembrane proteins in transit.

The protein resides in the mitochondrion inner membrane. The protein localises to the mitochondrion intermembrane space. Mitochondrial intermembrane chaperone that participates in the import and insertion of multi-pass transmembrane proteins into the mitochondrial inner membrane. Also required for the transfer of beta-barrel precursors from the TOM complex to the sorting and assembly machinery (SAM complex) of the outer membrane. Acts as a chaperone-like protein that protects the hydrophobic precursors from aggregation and guide them through the mitochondrial intermembrane space. Compared to TIM10, it may have a strong structural role. This Saccharomyces cerevisiae (strain ATCC 204508 / S288c) (Baker's yeast) protein is Mitochondrial import inner membrane translocase subunit TIM9 (TIM9).